Here is a 404-residue protein sequence, read N- to C-terminus: Dihydrosphingosine 1-phosphate phosphatase YSR3 (404 aa).

Over 1-86 (MTIIQTVTEL…PFRDVYFKYT (86 aa)) the chain is Lumenal. Asparagine 62 is a glycosylation site (N-linked (GlcNAc...) asparagine). A helical membrane pass occupies residues 87–107 (SLMGSHMFYVIVLPMPVWLGY). The Cytoplasmic portion of the chain corresponds to 108-113 (RDLTRD). Residues 114–134 (MIYVLGYSIYLSGYLKDYWCL) traverse the membrane as a helical segment. A phosphatase sequence motif I region spans residues 129 to 137 (KDYWCLPRP). Topologically, residues 135–154 (PRPKSPPVDRITLSEYTTKE) are lumenal. The chain crosses the membrane as a helical span at residues 155-176 (YGAPSSHSANATAVSLLFFWRI). The tract at residues 158–161 (PSSH) is phosphatase sequence motif II. Histidine 161 serves as the catalytic Proton donor. Topologically, residues 177 to 182 (CLSDTL) are cytoplasmic. The helical transmembrane segment at 183–203 (VWPTKLLLLSLVIFYYLTLVF) threads the bilayer. The Lumenal portion of the chain corresponds to 204-215 (GRVYCGMHGMLD). The phosphatase sequence motif III stretch occupies residues 204 to 215 (GRVYCGMHGMLD). Histidine 211 (nucleophile) is an active-site residue. A helical transmembrane segment spans residues 216–236 (LFSGAAVGAICFFIRIWVVHA). Residues 237-241 (LRNFQ) are Cytoplasmic-facing. The helical transmembrane segment at 242–262 (IGEHLWFPLLSVAWGLFILFN) threads the bilayer. Residues 263 to 319 (HVRPIDECPCFEDSVAFIGVVSGLDCSDWLTERYGWNLVCSRYASCGSKVFLRPLVG) lie on the Lumenal side of the membrane. Residues 320 to 340 (VASVIVWKDVISKTAVYTLLI) form a helical membrane-spanning segment. Residues 341–379 (KLLRFHDDRSEKVHFHNETSEEEECLLYSGVSKVEIVGR) lie on the Cytoplasmic side of the membrane. The chain crosses the membrane as a helical span at residues 380-400 (FLIYAGIPTTVFLLCPVFFTW). Over 401-404 (TNLR) the chain is Lumenal.

It belongs to the type 2 lipid phosphate phosphatase family.

The protein localises to the endoplasmic reticulum membrane. The enzyme catalyses sphinganine 1-phosphate + H2O = sphinganine + phosphate. In terms of biological role, dihydrosphingosine 1-phosphate phosphatase required for efficient ceramide synthesis from exogenous sphingoid bases. Involved in endocytosis and calcium-mediated signaling. In Saccharomyces cerevisiae (strain ATCC 204508 / S288c) (Baker's yeast), this protein is Dihydrosphingosine 1-phosphate phosphatase YSR3.